The sequence spans 268 residues: Thiazole synthase (268 aa).

K108 (schiff-base intermediate with DXP) is an active-site residue. 1-deoxy-D-xylulose 5-phosphate-binding positions include G169, 195-196 (AG), and 217-218 (NS). The interval 248–268 (RLKENPLASPSSPLDGVISNN) is disordered. Polar residues predominate over residues 255-268 (ASPSSPLDGVISNN).

The protein belongs to the ThiG family. Homotetramer. Forms heterodimers with either ThiH or ThiS.

Its subcellular location is the cytoplasm. It catalyses the reaction [ThiS sulfur-carrier protein]-C-terminal-Gly-aminoethanethioate + 2-iminoacetate + 1-deoxy-D-xylulose 5-phosphate = [ThiS sulfur-carrier protein]-C-terminal Gly-Gly + 2-[(2R,5Z)-2-carboxy-4-methylthiazol-5(2H)-ylidene]ethyl phosphate + 2 H2O + H(+). Its pathway is cofactor biosynthesis; thiamine diphosphate biosynthesis. In terms of biological role, catalyzes the rearrangement of 1-deoxy-D-xylulose 5-phosphate (DXP) to produce the thiazole phosphate moiety of thiamine. Sulfur is provided by the thiocarboxylate moiety of the carrier protein ThiS. In vitro, sulfur can be provided by H(2)S. In Prochlorococcus marinus (strain NATL2A), this protein is Thiazole synthase.